Consider the following 864-residue polypeptide: Mitochondrial 15S rRNA processing factor CCM1 (864 aa).

Residues 1 to 76 constitute a mitochondrion transit peptide; the sequence is MYMARCGPKN…REFSNTLKER (76 aa). 2 PPR repeats span residues 319 to 353 and 356 to 390; these read NKQN…STKH and DICT…NIKP.

Belongs to the CCM1 family. In terms of assembly, binds to mitochondrial small subunit 15S rRNA.

It localises to the mitochondrion. Regulates mitochondrial small subunit maturation by controlling 15S rRNA 5'-end processing. Localizes to the 5' precursor of the 15S rRNA in a position that is subsequently occupied by mS47 in the mature yeast mtSSU. Uses structure and sequence-specific RNA recognition, binding to a single-stranded region of the precursor and specifically recognizing bases -6 to -1. The exchange of Ccm1 for mS47 is coupled to the irreversible removal of precursor rRNA that is accompanied by conformational changes of the mitoribosomal proteins uS5m and mS26. These conformational changes signal completion of 5'-end rRNA processing through protection of the mature 5'-end of the 15S rRNA and stabilization of mS47. The removal of the 5' precursor together with the dissociation of Ccm1 may be catalyzed by the 5'-3' exoribonuclease Pet127. Involved in the specific removal of group I introns in mitochondrial encoded transcripts. The polypeptide is Mitochondrial 15S rRNA processing factor CCM1 (CCM1) (Saccharomyces cerevisiae (strain Lalvin EC1118 / Prise de mousse) (Baker's yeast)).